Here is a 467-residue protein sequence, read N- to C-terminus: MSTQSVIAVKQFSGPDKIAQAYTVPQPSAHVLSNANYDYDLCGSTNSTSLSCAIQSSNIKTESISSSSLPKILPFSTDSNGESSLSRMSQAEFSDPILSSSSTFCTSLYTSSPMNSGSCRKTGYLPFLPQPPKCEQQQNSVGQSSSSLMLLDADLRNSGHADDEHTDDLKDFLNLSSDCSFHGKCSAMAYNEQMEFQFLSEQLGIAISNNEESPRLDDIYDRPPQLMSLPVSSCSDQEDLQDARSPAKVQLSSSRSSSGTASCNKPRLRWTPELHERFVDAVNKLEGPEKATPKGVLKLMKVEGLTIYHIKSHLQKYRLAKYLPETKEDKKQEEKKTKSVANGNDHAKKKSAQMAEALRMQMEVQKQLHEQLEVQRQLQLRIEEHARYLQKILEEQQKARESISSMTSTTEGESPEFAPMEKTEDKAETSSAPLSKCRITDTDAECHSKVDNKKTKPQADLEMVHDE.

The segment at 227–266 (MSLPVSSCSDQEDLQDARSPAKVQLSSSRSSSGTASCNKP) is disordered. One can recognise an HTH myb-type domain in the interval 262-322 (SCNKPRLRWT…HLQKYRLAKY (61 aa)). A DNA-binding region (H-T-H motif) is located at residues 293–318 (PKGVLKLMKVEGLTIYHIKSHLQKYR). Basic and acidic residues predominate over residues 327-337 (KEDKKQEEKKT). 2 disordered regions span residues 327–353 (KEDK…KSAQ) and 400–467 (RESI…VHDE). Residues 402–412 (SISSMTSTTEG) show a composition bias toward polar residues. 2 stretches are compositionally biased toward basic and acidic residues: residues 419-428 (PMEKTEDKAE) and 438-467 (RITD…VHDE).

It localises to the nucleus. In terms of biological role, transcription factor involved in phosphate starvation signaling. Binds to P1BS, an imperfect palindromic sequence 5'-GNATATNC-3', to promote the expression of inorganic phosphate (Pi) starvation-responsive genes. Functionally redundant with PHR1 and PHR2 in regulating Pi starvation response and Pi homeostasis. This chain is Protein PHOSPHATE STARVATION RESPONSE 3, found in Oryza sativa subsp. indica (Rice).